The following is a 628-amino-acid chain: E3 SUMO-protein ligase PIAS3 (628 aa).

Residues 1–200 (MAELGELKHM…QLRFCLCETS (200 aa)) form an interaction with CCAR2 region. The SAP domain maps to 11–45 (VMSFRVSELQVLLGFAGRNKSGRKHELLAKALHLL). The LXXLL motif motif lies at 19-23 (LQVLL). Residues Lys46, Lys56, Lys230, and Lys307 each participate in a glycyl lysine isopeptide (Lys-Gly) (interchain with G-Cter in SUMO2) cross-link. The 166-residue stretch at 115 to 280 (MHPPLPQPVH…SLSVYLVRQL (166 aa)) folds into the PINIT domain. The SP-RING-type zinc-finger motif lies at 312–393 (PDSEVATTSL…FMEILNSCSD (82 aa)). Residues Cys343, His345, Cys366, and Cys369 each contribute to the Zn(2+) site. The interval 450-460 (LTIESSSDEED) is SUMO1-binding. Residues Lys466 and Lys482 each participate in a glycyl lysine isopeptide (Lys-Gly) (interchain with G-Cter in SUMO2) cross-link. Positions 571-628 (GPLAPTLGSSHRSSTPAPPPGRVSSIVAPGSSLREGHGGPLPSGPSLTGCRSDVISLD) are disordered.

This sequence belongs to the PIAS family. As to quaternary structure, monomer. Interacts with PLAG1 and ZFHX3. Interacts with STAT5A; the interaction occurs on stimulation by PRL. Binds SUMO1 and UBE2I. Interacts with AR, BCL11A, HMGA2, IRF1 and NCOA2. Interacts with MITF; the interaction inhibits the transcriptional activity of MITF. Interacts with STAT3; the interaction occurs on stimulation by IL6, CNTF or OSM and inhibits the DNA binding activity of STAT3. Interacts with GFI1; the interaction relieves the inhibitory effect of PIAS3 on STAT3-mediated transcriptional activity. Interacts with MTA1. Interacts with CCAR2 (via N-terminus). Interacts with TRIM8. Interacts with PRDM1. In terms of processing, sumoylated. As to expression, expressed in kidney, heart, spleen, brain and cerebellum; weak expression, if any, in liver and lung.

The protein localises to the cytoplasm. It is found in the nucleus. Its subcellular location is the nucleus speckle. The protein operates within protein modification; protein sumoylation. Its function is as follows. Functions as an E3-type small ubiquitin-like modifier (SUMO) ligase, stabilizing the interaction between UBE2I and the substrate, and as a SUMO-tethering factor. Plays a crucial role as a transcriptional coregulation in various cellular pathways, including the STAT pathway and the steroid hormone signaling pathway. Repressor of STAT3 signaling via inhibiting STAT3 DNA-binding and suppressing cell growth. Repressor of MITF transcriptional activity. Enhances the sumoylation of MTA1 and may participate in its paralog-selective sumoylation. Sumoylates CCAR2 which promotes its interaction with SIRT1. Diminishes the sumoylation of ZFHX3 by preventing the colocalization of ZFHX3 with SUMO1 in the nucleus. The sequence is that of E3 SUMO-protein ligase PIAS3 (Pias3) from Mus musculus (Mouse).